The sequence spans 1369 residues: DNA-directed RNA polymerase subunit beta (1369 aa).

The protein belongs to the RNA polymerase beta chain family. As to quaternary structure, the RNAP catalytic core consists of 2 alpha, 1 beta, 1 beta' and 1 omega subunit. When a sigma factor is associated with the core the holoenzyme is formed, which can initiate transcription.

The enzyme catalyses RNA(n) + a ribonucleoside 5'-triphosphate = RNA(n+1) + diphosphate. DNA-dependent RNA polymerase catalyzes the transcription of DNA into RNA using the four ribonucleoside triphosphates as substrates. The sequence is that of DNA-directed RNA polymerase subunit beta from Solidesulfovibrio magneticus (strain ATCC 700980 / DSM 13731 / RS-1) (Desulfovibrio magneticus).